The primary structure comprises 21 residues: Peptidyl-prolyl cis-trans isomerase (21 aa).

Positions 1–21 are disordered; sequence ENFKIKHTEPGLLSMANAGKN.

Belongs to the cyclophilin-type PPIase family. PPIase A subfamily.

The catalysed reaction is [protein]-peptidylproline (omega=180) = [protein]-peptidylproline (omega=0). Functionally, PPIases accelerate the folding of proteins. It catalyzes the cis-trans isomerization of proline imidic peptide bonds in oligopeptides. The polypeptide is Peptidyl-prolyl cis-trans isomerase (Naegleria fowleri (Brain eating amoeba)).